The following is an 88-amino-acid chain: U-scoloptoxin(XY)-Er1a (88 aa).

An N-terminal signal peptide occupies residues 1–24; that stretch reads MASQVVLSFALVVVLAVFVGQVDS. Residues 66–88 are disordered; sequence RPELSPGAWDDSSEEKDNEASLA. A propeptide spanning residues 79 to 88 is cleaved from the precursor; sequence EEKDNEASLA.

This sequence belongs to the scoloptoxin-XY family. In terms of processing, contains 3 disulfide bonds. As to expression, expressed by the venom gland.

The protein localises to the secreted. The sequence is that of U-scoloptoxin(XY)-Er1a from Ethmostigmus rubripes (Giant centipede).